The primary structure comprises 578 residues: Tetratricopeptide repeat protein 39A (578 aa).

TPR repeat units lie at residues 280-313 (AIFLFFAGRIEAIKGNIDAAVRRFEECCEAQQHW), 470-503 (CLVKLLKGLCLKYLGRIQEAEENFRSISANEKKI), and 511-544 (PNALLELALLFMEQGRNEEAIKLLESAKQNYKNY).

The protein belongs to the TTC39 family.

This chain is Tetratricopeptide repeat protein 39A (Ttc39a), found in Mus musculus (Mouse).